A 230-amino-acid chain; its full sequence is Orotidine 5'-phosphate decarboxylase (230 aa).

Substrate contacts are provided by residues D10, K32, 59–68 (DLKYHDIPNT), T119, R180, Q189, G209, and R210. K61 functions as the Proton donor in the catalytic mechanism.

It belongs to the OMP decarboxylase family. Type 1 subfamily. In terms of assembly, homodimer.

The catalysed reaction is orotidine 5'-phosphate + H(+) = UMP + CO2. It functions in the pathway pyrimidine metabolism; UMP biosynthesis via de novo pathway; UMP from orotate: step 2/2. Catalyzes the decarboxylation of orotidine 5'-monophosphate (OMP) to uridine 5'-monophosphate (UMP). The polypeptide is Orotidine 5'-phosphate decarboxylase (Glaesserella parasuis serovar 5 (strain SH0165) (Haemophilus parasuis)).